Here is a 432-residue protein sequence, read N- to C-terminus: Glutamyl-tRNA reductase (432 aa).

Residues 55-58 (TCNR), Ser-114, 119-121 (ETQ), and Gln-125 contribute to the substrate site. Cys-56 (nucleophile) is an active-site residue. NADP(+) is bound at residue 194-199 (GAGEMI).

It belongs to the glutamyl-tRNA reductase family. In terms of assembly, homodimer.

It carries out the reaction (S)-4-amino-5-oxopentanoate + tRNA(Glu) + NADP(+) = L-glutamyl-tRNA(Glu) + NADPH + H(+). It functions in the pathway porphyrin-containing compound metabolism; protoporphyrin-IX biosynthesis; 5-aminolevulinate from L-glutamyl-tRNA(Glu): step 1/2. Catalyzes the NADPH-dependent reduction of glutamyl-tRNA(Glu) to glutamate 1-semialdehyde (GSA). The polypeptide is Glutamyl-tRNA reductase (Burkholderia thailandensis (strain ATCC 700388 / DSM 13276 / CCUG 48851 / CIP 106301 / E264)).